The primary structure comprises 952 residues: Glycine dehydrogenase (decarboxylating) (952 aa).

Position 703 is an N6-(pyridoxal phosphate)lysine (Lys-703).

Belongs to the GcvP family. The glycine cleavage system is composed of four proteins: P, T, L and H. It depends on pyridoxal 5'-phosphate as a cofactor.

It carries out the reaction N(6)-[(R)-lipoyl]-L-lysyl-[glycine-cleavage complex H protein] + glycine + H(+) = N(6)-[(R)-S(8)-aminomethyldihydrolipoyl]-L-lysyl-[glycine-cleavage complex H protein] + CO2. The glycine cleavage system catalyzes the degradation of glycine. The P protein binds the alpha-amino group of glycine through its pyridoxal phosphate cofactor; CO(2) is released and the remaining methylamine moiety is then transferred to the lipoamide cofactor of the H protein. This Mycolicibacterium gilvum (strain PYR-GCK) (Mycobacterium gilvum (strain PYR-GCK)) protein is Glycine dehydrogenase (decarboxylating).